Consider the following 582-residue polypeptide: uncharacterized protein (582 aa).

A signal peptide spans 1 to 27 (MNYAVLPPELNSLRMFTGAGSAPMLAA). Residues 241-257 (GNGRAGLPGSGNVGNGN) show a composition bias toward gly residues. The tract at residues 241 to 278 (GNGRAGLPGSGNVGNGNLGNSNLGSGNTGNSNVGFGNT) is disordered. Over residues 258-278 (LGNSNLGSGNTGNSNVGFGNT) the composition is skewed to low complexity.

This sequence belongs to the mycobacterial PPE family.

This is an uncharacterized protein from Mycobacterium tuberculosis (strain ATCC 25618 / H37Rv).